Reading from the N-terminus, the 426-residue chain is Serine--tRNA ligase (426 aa).

The segment covering 41–60 (QTRTEQLQAERNARSKSIGQ) has biased composition (polar residues). A disordered region spans residues 41 to 64 (QTRTEQLQAERNARSKSIGQAKQR). 233–235 (TAE) is an L-serine binding site. Residue 264–266 (RSE) participates in ATP binding. An L-serine-binding site is contributed by glutamate 287. An ATP-binding site is contributed by 351 to 354 (EISS). Serine 387 contacts L-serine.

The protein belongs to the class-II aminoacyl-tRNA synthetase family. Type-1 seryl-tRNA synthetase subfamily. In terms of assembly, homodimer. The tRNA molecule binds across the dimer.

It is found in the cytoplasm. The catalysed reaction is tRNA(Ser) + L-serine + ATP = L-seryl-tRNA(Ser) + AMP + diphosphate + H(+). It carries out the reaction tRNA(Sec) + L-serine + ATP = L-seryl-tRNA(Sec) + AMP + diphosphate + H(+). Its pathway is aminoacyl-tRNA biosynthesis; selenocysteinyl-tRNA(Sec) biosynthesis; L-seryl-tRNA(Sec) from L-serine and tRNA(Sec): step 1/1. Functionally, catalyzes the attachment of serine to tRNA(Ser). Is also able to aminoacylate tRNA(Sec) with serine, to form the misacylated tRNA L-seryl-tRNA(Sec), which will be further converted into selenocysteinyl-tRNA(Sec). This is Serine--tRNA ligase from Pseudomonas fluorescens (strain ATCC BAA-477 / NRRL B-23932 / Pf-5).